The chain runs to 230 residues: 2-C-methyl-D-erythritol 4-phosphate cytidylyltransferase (230 aa).

This sequence belongs to the IspD/TarI cytidylyltransferase family. IspD subfamily.

The enzyme catalyses 2-C-methyl-D-erythritol 4-phosphate + CTP + H(+) = 4-CDP-2-C-methyl-D-erythritol + diphosphate. The protein operates within isoprenoid biosynthesis; isopentenyl diphosphate biosynthesis via DXP pathway; isopentenyl diphosphate from 1-deoxy-D-xylulose 5-phosphate: step 2/6. Catalyzes the formation of 4-diphosphocytidyl-2-C-methyl-D-erythritol from CTP and 2-C-methyl-D-erythritol 4-phosphate (MEP). The polypeptide is 2-C-methyl-D-erythritol 4-phosphate cytidylyltransferase (Laribacter hongkongensis (strain HLHK9)).